The following is a 554-amino-acid chain: Putative F-box/LRR-repeat protein 8 (554 aa).

In terms of domain architecture, F-box spans 71–117 (YDYISNLPDECLSLIFQSLTCADLKRCSLVCRRWLTIEGQCRHRLSL). 12 LRR repeats span residues 119–144 (AQSD…VLRS), 148–173 (SLGI…KLRG), 174–199 (CPEI…SFGS), 205–224 (KGMN…SVKR), 250–275 (KELH…KIFR), 301–325 (RIQM…HLVK), 326–351 (TPDC…HIDG), 354–379 (TNRI…VLIG), 383–404 (TKLS…ALCG), 405–428 (SDTV…KLCI), 430–455 (NCPI…KVKK), and 456–480 (CRGV…NLDA).

This is Putative F-box/LRR-repeat protein 8 (FBL8) from Arabidopsis thaliana (Mouse-ear cress).